Reading from the N-terminus, the 183-residue chain is Adenine phosphoribosyltransferase (183 aa).

Belongs to the purine/pyrimidine phosphoribosyltransferase family. Homodimer.

It localises to the cytoplasm. The catalysed reaction is AMP + diphosphate = 5-phospho-alpha-D-ribose 1-diphosphate + adenine. Its pathway is purine metabolism; AMP biosynthesis via salvage pathway; AMP from adenine: step 1/1. In terms of biological role, catalyzes a salvage reaction resulting in the formation of AMP, that is energically less costly than de novo synthesis. The protein is Adenine phosphoribosyltransferase of Shigella flexneri serotype 5b (strain 8401).